A 329-amino-acid polypeptide reads, in one-letter code: MSSTPVNVTVTGAAGQIGYALLFRIASGQLLGADTPVRLRLLEIPQAVRAAEGTALELEDSAFPLLAGVDVFDDAKRAFEGTNVALLVGARPRTKGMERGDLLSANGGIFKPQGEAINSGAAEDIRVLVVGNPANTNALIAQTHAPDVPAERFTAMTRLDHNRAIAQLAKKLGVPSAEIRKITIWGNHSATQYPDIFHAQVGGRSGAEAVGDQKWIAEEFIPRVAKRGAEIIEVRGASSAASAASAAIDHVYTWVNGTPEGDWTSAAIPSDGSYGVPEGLISSFPVTAAGGKFEIVQGLELDAFSREKIDASVRELAEEREAVRALGLI.

NAD(+) is bound at residue 12–18; that stretch reads GAAGQIG. Substrate contacts are provided by R93 and R99. NAD(+)-binding positions include N106, Q113, and 130–132; that span reads VGN. 2 residues coordinate substrate: N132 and R163. The active-site Proton acceptor is the H188.

Belongs to the LDH/MDH superfamily. MDH type 2 family.

It carries out the reaction (S)-malate + NAD(+) = oxaloacetate + NADH + H(+). Functionally, catalyzes the reversible oxidation of malate to oxaloacetate. This chain is Malate dehydrogenase, found in Frankia alni (strain DSM 45986 / CECT 9034 / ACN14a).